The primary structure comprises 434 residues: MSKITKIIAREIIDSRGNPTVESEVHLEGGFVGLASSPSGASTGSLEALELRDENKDRFMGKGVEKAVSLINEKISIALKNKNARNQSDIDHIMIDLDGTINKSKLGANAILSVSLAVAKAAAASKRMPLYAHIAEINETPGVFSMPLPMINIINGGKHANNNIDIQEFMIQPISAKTVKESIRIGCEIFHALGELLKEKGMSTTVGDEGGYAPNLKSNEEALNIIQDAIQKTKYKLGQDIRLAIDCAASELYNKNEKKYNLKGENISFSSKEFTHYLEKLSQKYPIVSIEDGQDESDWEGFLYQTHVLGNKIQLVGDDLFVTNKNILKKGIKKGIANSILIKLNQIGTLTETLEAIKTAKQANYGVIISHRSGETEDASIADLSVGTSSGQIKTGSMSRSDRTSKYNQLIRIEENLGTKYAPFHGLREIKSAF.

Residue Q167 coordinates (2R)-2-phosphoglycerate. The active-site Proton donor is the E209. 3 residues coordinate Mg(2+): D246, E291, and D318. (2R)-2-phosphoglycerate-binding residues include K343, R372, S373, and K394. K343 (proton acceptor) is an active-site residue.

It belongs to the enolase family. Component of the RNA degradosome, a multiprotein complex involved in RNA processing and mRNA degradation. It depends on Mg(2+) as a cofactor.

The protein resides in the cytoplasm. It is found in the secreted. The protein localises to the cell surface. It carries out the reaction (2R)-2-phosphoglycerate = phosphoenolpyruvate + H2O. It functions in the pathway carbohydrate degradation; glycolysis; pyruvate from D-glyceraldehyde 3-phosphate: step 4/5. Its function is as follows. Catalyzes the reversible conversion of 2-phosphoglycerate (2-PG) into phosphoenolpyruvate (PEP). It is essential for the degradation of carbohydrates via glycolysis. This is Enolase from Buchnera aphidicola subsp. Acyrthosiphon pisum (strain APS) (Acyrthosiphon pisum symbiotic bacterium).